The following is a 366-amino-acid chain: Protein lifeguard 1 (366 aa).

A disordered region spans residues 1-141 (MSHEKSFLVS…GPPSYYDNQD (141 aa)). Pro residues-rich tracts occupy residues 14–44 (YPPPNPGYPGGPQPSMAPYPGAPYPQAPFQP) and 67–109 (GPYP…PNPY). Helical transmembrane passes span 160–180 (VFLVLTLQLSVTLSTVAVFTF), 192–212 (VWTYYVSYAIFFVSLIVLSCC), 223–243 (LVALSILTVSLSYMVGMIASF), 248–268 (AVIMAVGITTTVCFTVVIFSM), 278–298 (VGVLLVSVVVLILFAILCIFI), 302–322 (VLEIVYASLGALLFTCFLAVD), and 341–361 (FAALNLYTDIINIFLYILTII).

This sequence belongs to the BI1 family. LFG subfamily.

Its subcellular location is the membrane. In terms of biological role, potential apoptotic regulator. The chain is Protein lifeguard 1 (GRINA) from Bos taurus (Bovine).